We begin with the raw amino-acid sequence, 215 residues long: UPF0441 protein SG0265 (215 aa).

Belongs to the UPF0441 family.

The polypeptide is UPF0441 protein SG0265 (Sodalis glossinidius (strain morsitans)).